The following is a 79-amino-acid chain: RNA-binding protein Hfq (79 aa).

One can recognise a Sm domain in the interval D10 to V70.

It belongs to the Hfq family. Homohexamer.

In terms of biological role, RNA chaperone that binds small regulatory RNA (sRNAs) and mRNAs to facilitate mRNA translational regulation in response to envelope stress, environmental stress and changes in metabolite concentrations. Also binds with high specificity to tRNAs. The sequence is that of RNA-binding protein Hfq from Bartonella tribocorum (strain CIP 105476 / IBS 506).